Here is a 385-residue protein sequence, read N- to C-terminus: ATP phosphoribosyltransferase regulatory subunit (385 aa).

Belongs to the class-II aminoacyl-tRNA synthetase family. HisZ subfamily. Heteromultimer composed of HisG and HisZ subunits.

Its subcellular location is the cytoplasm. It functions in the pathway amino-acid biosynthesis; L-histidine biosynthesis; L-histidine from 5-phospho-alpha-D-ribose 1-diphosphate: step 1/9. Required for the first step of histidine biosynthesis. May allow the feedback regulation of ATP phosphoribosyltransferase activity by histidine. The chain is ATP phosphoribosyltransferase regulatory subunit from Bordetella parapertussis (strain 12822 / ATCC BAA-587 / NCTC 13253).